We begin with the raw amino-acid sequence, 163 residues long: Cyanate hydratase (163 aa).

Active-site residues include R103, E106, and S129.

Belongs to the cyanase family.

The catalysed reaction is cyanate + hydrogencarbonate + 3 H(+) = NH4(+) + 2 CO2. Catalyzes the reaction of cyanate with bicarbonate to produce ammonia and carbon dioxide. This is Cyanate hydratase from Ajellomyces capsulatus (strain G186AR / H82 / ATCC MYA-2454 / RMSCC 2432) (Darling's disease fungus).